Here is a 494-residue protein sequence, read N- to C-terminus: Tetracenomycin biosynthesis bifunctional cyclase/O-methyl transferase TcmN (494 aa).

Positions 11-140 (VNAPFELVWD…TTTRANMERI (130 aa)) are polyketide cyclase. The active-site Proton acceptor; for cyclase activity is the Ser-67. Active-site proton donor; for cyclase activity residues include Arg-69 and Arg-82. Positions 169-494 (LLLAASGRLA…TWTTLECRPV (326 aa)) are methyltransferase. S-adenosyl-L-methionine is bound by residues Asp-358 and 384–386 (GDF). Residue His-405 is the Proton acceptor; for methyltransferase activity of the active site.

It in the C-terminal section; belongs to the class I-like SAM-binding methyltransferase superfamily. Cation-independent O-methyltransferase family. The tetracenomycin polyketide synthase (TCM PKS) is composed of a ketosynthase complex (TcmKL), an acyl carrier protein (TcmM), a cyclase (TcmN) and a probable second cyclase (TcmJ). TcmN is a homodimer in solution.

It carries out the reaction 10 malonyl-CoA + 8 H(+) = tetracenomycin F2 + 10 CO2 + 10 CoA + 2 H2O. It participates in antibiotic biosynthesis; tetracenomycin C biosynthesis. Functionally, involved in the biosynthesis of tetracenomycin C (TCM C). Part of a type II polyketide synthase (PKS) that catalyzes the synthesis of tetracenomycin F2 (TCM F2), a precursor of TCM C, from malonyl-CoA. The TcmN N-terminal domain, when coupled with the other components of the PKS, catalyzes the cyclization and aromatization of the linear polyketide intermediate. Catalyzes the cyclization of the first and second rings. In addition, the C-terminal domain acts as a methyltransferase. It catalyzes the specific O-methylation of tetracenomycin D3 (TCM D3) to TCM B3, using S-adenosyl-L-methionine as the methyl donor. The sequence is that of Tetracenomycin biosynthesis bifunctional cyclase/O-methyl transferase TcmN from Streptomyces glaucescens.